A 257-amino-acid chain; its full sequence is Cytosolic Fe-S cluster assembly factor NUBP2 homolog (257 aa).

14–21 provides a ligand contact to ATP; it reads GKGGVGKS. The [4Fe-4S] cluster site is built by cysteine 188 and cysteine 191.

It belongs to the Mrp/NBP35 ATP-binding proteins family. NUBP2/CFD1 subfamily. In terms of assembly, heterotetramer of 2 NUBP1 and 2 NUBP2 chains. [4Fe-4S] cluster serves as cofactor.

The protein resides in the cytoplasm. Functionally, component of the cytosolic iron-sulfur (Fe/S) protein assembly (CIA) machinery. Required for maturation of extramitochondrial Fe-S proteins. The NUBP1-NUBP2 heterotetramer forms a Fe-S scaffold complex, mediating the de novo assembly of an Fe-S cluster and its transfer to target apoproteins. In Culex quinquefasciatus (Southern house mosquito), this protein is Cytosolic Fe-S cluster assembly factor NUBP2 homolog.